The chain runs to 350 residues: Phenylalanine--tRNA ligase alpha subunit (350 aa).

Glutamate 257 lines the Mg(2+) pocket.

It belongs to the class-II aminoacyl-tRNA synthetase family. Phe-tRNA synthetase alpha subunit type 1 subfamily. In terms of assembly, tetramer of two alpha and two beta subunits. Mg(2+) serves as cofactor.

The protein resides in the cytoplasm. The enzyme catalyses tRNA(Phe) + L-phenylalanine + ATP = L-phenylalanyl-tRNA(Phe) + AMP + diphosphate + H(+). The polypeptide is Phenylalanine--tRNA ligase alpha subunit (Listeria monocytogenes serotype 4a (strain HCC23)).